Reading from the N-terminus, the 232-residue chain is Probable proteasome subunit alpha type-3 (232 aa).

The protein belongs to the peptidase T1A family. The 26S proteasome consists of a 20S proteasome core and two 19S regulatory subunits. The 20S proteasome core is composed of 28 subunits that are arranged in four stacked rings, resulting in a barrel-shaped structure. The two end rings are each formed by seven alpha subunits, and the two central rings are each formed by seven beta subunits. The catalytic chamber with the active sites is on the inside of the barrel.

It localises to the cytoplasm. The protein localises to the nucleus. Its function is as follows. The proteasome degrades poly-ubiquitinated proteins in the cytoplasm and in the nucleus. It is essential for the regulated turnover of proteins and for the removal of misfolded proteins. The proteasome is a multicatalytic proteinase complex that is characterized by its ability to cleave peptides with Arg, Phe, Tyr, Leu, and Glu adjacent to the leaving group at neutral or slightly basic pH. It has an ATP-dependent proteolytic activity. In Encephalitozoon cuniculi (strain GB-M1) (Microsporidian parasite), this protein is Probable proteasome subunit alpha type-3 (PRE9).